The sequence spans 608 residues: Bifunctional lycopene cyclase/phytoene synthase (608 aa).

The lycopene beta-cyclase stretch occupies residues 1–240 (MSILTYLEFH…LVFATCAIDR (240 aa)). 7 consecutive transmembrane segments (helical) span residues 3 to 23 (ILTYLEFHLYYTLPVLAALCW), 37 to 56 (YKFLMLMAASTASIWDNYIV), 80 to 97 (YMFFIIMTLMTVAFSNFV), 117 to 137 (LLVRLVPVSALLAITYHAWHL), 150 to 170 (ILWYACPVLAILWLGAGEYIL), 175 to 195 (AVLLSIVIPSVYLCWADIVAI), and 218 to 238 (VEECLFFTLINTVLVFATCAI). Residues 247–608 (LYKSSVQNQN…ARKIKSFFVD (362 aa)) are phytoene synthase.

In the N-terminal section; belongs to the lycopene beta-cyclase family. The protein in the C-terminal section; belongs to the phytoene/squalene synthase family.

The protein localises to the membrane. It catalyses the reaction all-trans-lycopene = gamma-carotene. The catalysed reaction is gamma-carotene = all-trans-beta-carotene. It carries out the reaction 2 (2E,6E,10E)-geranylgeranyl diphosphate = 15-cis-phytoene + 2 diphosphate. Its pathway is carotenoid biosynthesis; beta-carotene biosynthesis. The protein operates within carotenoid biosynthesis; phytoene biosynthesis; all-trans-phytoene from geranylgeranyl diphosphate: step 1/1. Functionally, bifunctional enzyme that catalyzes the reactions from geranylgeranyl diphosphate to phytoene (phytoene synthase) and lycopene to beta-carotene via the intermediate gamma-carotene (lycopene cyclase). In Blakeslea trispora (Choanephora trispora), this protein is Bifunctional lycopene cyclase/phytoene synthase.